The primary structure comprises 427 residues: 3-phosphoshikimate 1-carboxyvinyltransferase (427 aa).

The 3-phosphoshikimate site is built by K22, S23, and R27. K22 is a phosphoenolpyruvate binding site. The phosphoenolpyruvate site is built by G96 and R124. The 3-phosphoshikimate site is built by S169, S170, Q171, S197, D313, N336, and K340. Residue Q171 participates in phosphoenolpyruvate binding. The Proton acceptor role is filled by D313. Phosphoenolpyruvate is bound by residues R344, R386, and K411.

The protein belongs to the EPSP synthase family. In terms of assembly, monomer.

The protein localises to the cytoplasm. It catalyses the reaction 3-phosphoshikimate + phosphoenolpyruvate = 5-O-(1-carboxyvinyl)-3-phosphoshikimate + phosphate. It functions in the pathway metabolic intermediate biosynthesis; chorismate biosynthesis; chorismate from D-erythrose 4-phosphate and phosphoenolpyruvate: step 6/7. Catalyzes the transfer of the enolpyruvyl moiety of phosphoenolpyruvate (PEP) to the 5-hydroxyl of shikimate-3-phosphate (S3P) to produce enolpyruvyl shikimate-3-phosphate and inorganic phosphate. This is 3-phosphoshikimate 1-carboxyvinyltransferase from Salmonella typhi.